We begin with the raw amino-acid sequence, 148 residues long: Large ribosomal subunit protein bL9 (148 aa).

The protein belongs to the bacterial ribosomal protein bL9 family.

In terms of biological role, binds to the 23S rRNA. In Streptomyces avermitilis (strain ATCC 31267 / DSM 46492 / JCM 5070 / NBRC 14893 / NCIMB 12804 / NRRL 8165 / MA-4680), this protein is Large ribosomal subunit protein bL9.